The following is a 398-amino-acid chain: GVKTVLLLIVGVLGAYYVYTPLPDNIEEPWRLLWVNAHMKTLTNLALFAEYLGSNIFMNTVKFLTSFQEVPPTSDENVTVTETTFNNVPVRVYVPKRKSKTLRRGLFYIHGGGWCVGSAALSGYDLLSRRTADRLDVVVVSTNYRLAPEYHFPIQFEDVYDALKWFLRQDVLEKYGVDPERVGVSGDSAGGNLAAAVAQQLIKDPDVKIKLKTQSLIYPALQTLDMDLPSYRENAQFPILSKSFMVRLWSEYFTSDRSLEKAMLLNQHVPVESSHLFKFTNWSSLLPEKFKKGHVYNTPTYGSSELARKYPGFLDVRAAPLLADDAQLRGFPLTYVITCQYDVLRDDGVMYVTRLRNAGVQVTHNHIEDGFHGALSYNGFKTGYRVEKQYFEWLRENV.

Over 1 to 4 (GVKT) the chain is Cytoplasmic. A helical; Signal-anchor for type II membrane protein membrane pass occupies residues 5–22 (VLLLIVGVLGAYYVYTPL). Topologically, residues 23-398 (PDNIEEPWRL…QYFEWLRENV (376 aa)) are lumenal. A glycan (N-linked (GlcNAc...) asparagine) is linked at asparagine 77. An Involved in the stabilization of the negatively charged intermediate by the formation of the oxyanion hole motif is present at residues 110–112 (HGG). A disulfide bridge links cysteine 115 with cysteine 339. The active site involves serine 188. Residue asparagine 281 is glycosylated (N-linked (GlcNAc...) asparagine). Active-site residues include aspartate 342 and histidine 372.

It belongs to the 'GDXG' lipolytic enzyme family. Glycosylated.

It is found in the endoplasmic reticulum membrane. The protein resides in the microsome membrane. The enzyme catalyses a triacylglycerol + H2O = a diacylglycerol + a fatty acid + H(+). Inhibited by diisopropylphosphofluoridate (DFP). Displays cellular triglyceride lipase activity in liver, increases the levels of intracellular fatty acids derived from the hydrolysis of newly formed triglyceride stores and plays a role in very low-density lipoprotein assembly. Displays serine esterase activity in liver. Deacetylates a variety of arylacetamide substrates, including xenobiotic compounds and procarcinogens, converting them to the primary arylamide compounds and increasing their toxicity. The chain is Arylacetamide deacetylase from Oryctolagus cuniculus (Rabbit).